A 1616-amino-acid polypeptide reads, in one-letter code: Protein Shroom2 (1616 aa).

The PDZ domain occupies 26 to 108; it reads LVEVQLSGGA…TLKLVVKRRS (83 aa). 2 disordered regions span residues 128-159 and 183-229; these read ELAASPFTSTSGCPSWSGRHHASSSSHDLSSS and HPSS…KADT. The span at 150–159 shows a compositional bias: low complexity; sequence SSSSHDLSSS. Polar residues-rich tracts occupy residues 186 to 197 and 220 to 229; these read SRLSVAKSNSSI and PDHTLSKADT. Ser231 bears the Phosphoserine mark. Residues 247 to 259 show a composition bias toward low complexity; it reads QGGRQAQAAGDPQ. Disordered regions lie at residues 247–475, 502–678, 695–790, 802–869, 881–1100, 1115–1184, 1268–1302, and 1363–1389; these read QGGR…SGWQ, GALE…PLAG, TSFK…SEDT, EETS…LPRR, KEQR…PSPA, PSVF…LTDK, AEPEAPHRAQPAEPQPLGTQVPPEKDRCTSPPGLS, and QRRKLLPKIPSPRSTEERKEEPSVPAA. A compositionally biased stretch (pro residues) spans 312-321; the sequence is SSPPPPPPPL. Phosphoserine is present on residues Ser313 and Ser325. Residues 343-356 show a composition bias toward low complexity; sequence AAAAQHFTALAQAQ. Residues 358–370 show a composition bias toward basic and acidic residues; it reads RGDRRPELTDRPW. Residues 405–415 are compositionally biased toward low complexity; sequence SSRLQASLSSS. The residue at position 413 (Ser413) is a Phosphoserine. The region spanning 684–773 is the ASD1 domain; that stretch reads LKEAQARVLR…SEPEKMNEVG (90 aa). 2 stretches are compositionally biased toward basic and acidic residues: residues 754–770 and 821–830; these read FTAEQKLKSYSEPEKMN and IPRDKPERPR. Positions 842–854 are enriched in polar residues; the sequence is WSRTTSLGDSLNA. Ser851, Ser897, Ser921, Ser922, and Ser924 each carry phosphoserine. Thr925 is modified (phosphothreonine). Over residues 926 to 958 the composition is skewed to basic and acidic residues; it reads DHYKQEASVELRRQAGDPGEPREELPSAVRAEE. Ser974 bears the Phosphoserine mark. Over residues 975–994 the composition is skewed to polar residues; the sequence is PGSQQHPPSQKAPNPPTFSE. Residues Ser1036 and Ser1039 each carry the phosphoserine modification. The segment covering 1068 to 1077 has biased composition (basic and acidic residues); it reads PKREPRRYRA. The segment covering 1159 to 1176 has biased composition (polar residues); sequence LRLQTATMETSRSPSPQF. Residues Ser1171, Ser1173, and Ser1297 each carry the phosphoserine modification. In terms of domain architecture, ASD2 spans 1317-1611; sequence EELAREIVGK…QLKCLLDSLQ (295 aa).

This sequence belongs to the shroom family. In terms of assembly, interacts with F-actin. In terms of tissue distribution, abundant in retina and melanoma; also in brain, placenta, lung, kidney and pancreas.

It localises to the apical cell membrane. The protein localises to the cell junction. The protein resides in the tight junction. It is found in the cytoplasm. Its subcellular location is the cytoskeleton. Its function is as follows. May be involved in endothelial cell morphology changes during cell spreading. In the retinal pigment epithelium, may regulate the biogenesis of melanosomes and promote their association with the apical cell surface by inducing gamma-tubulin redistribution. This Homo sapiens (Human) protein is Protein Shroom2 (SHROOM2).